Reading from the N-terminus, the 250-residue chain is Serine/arginine-rich splicing factor RS31A (250 aa).

RRM domains are found at residues Arg-2–Asp-74 and Lys-95–Arg-166. The disordered stretch occupies residues Glu-170–Gly-250. Over residues Gly-177–Arg-191 the composition is skewed to basic residues. A phosphoserine mark is found at Ser-183, Ser-185, Ser-201, Ser-218, and Ser-243. A compositionally biased stretch (basic and acidic residues) spans Pro-192–Arg-230.

Belongs to the splicing factor SR family. RS subfamily. Component of the spliceosome. Interacts with MOS14.

It localises to the nucleus speckle. It is found in the nucleus. Its subcellular location is the nucleoplasm. Its function is as follows. Probably involved in intron recognition and spliceosome assembly. In Arabidopsis thaliana (Mouse-ear cress), this protein is Serine/arginine-rich splicing factor RS31A (RS31A).